The sequence spans 63 residues: Progonadoliberin-1 (63 aa).

Q1 is subject to Pyrrolidone carboxylic acid. Glycine amide is present on G10.

The protein belongs to the GnRH family. The precursor is cleaved by ACE, which removes the Gly-Lys-Arg peptide at the C-terminus, leading to mature hormone. The mature form of Gonadoliberin-1 is also cleaved and degraded by ACE.

It localises to the secreted. In terms of biological role, stimulates the secretion of gonadotropins; it stimulates the secretion of both luteinizing and follicle-stimulating hormones. The chain is Progonadoliberin-1 (GNRH1) from Mesocricetus auratus (Golden hamster).